A 779-amino-acid chain; its full sequence is 3-isopropylmalate dehydratase (779 aa).

The [4Fe-4S] cluster site is built by Cys-360, Cys-421, and Cys-424. The tract at residues 484 to 518 is disordered; the sequence is QDQSSPKVEVTSEDEKELESAAYDHAEPVQPEDAP. Ser-488 is subject to Phosphoserine. The residue at position 494 (Thr-494) is a Phosphothreonine. Ser-495 carries the post-translational modification Phosphoserine. Over residues 501-510 the composition is skewed to basic and acidic residues; it reads LESAAYDHAE.

The protein belongs to the aconitase/IPM isomerase family. As to quaternary structure, monomer. Requires [4Fe-4S] cluster as cofactor.

It carries out the reaction (2R,3S)-3-isopropylmalate = (2S)-2-isopropylmalate. The protein operates within amino-acid biosynthesis; L-leucine biosynthesis; L-leucine from 3-methyl-2-oxobutanoate: step 2/4. In terms of biological role, catalyzes the isomerization between 2-isopropylmalate and 3-isopropylmalate, via the formation of 2-isopropylmaleate. The chain is 3-isopropylmalate dehydratase (LEU1) from Saccharomyces cerevisiae (strain ATCC 204508 / S288c) (Baker's yeast).